A 185-amino-acid chain; its full sequence is Methanol dehydrogenase activator (185 aa).

Belongs to the Nudix hydrolase family. Homodimer. The cofactor is Mg(2+).

Functionally, involved in the activation of the NAD-dependent methanol dehydrogenase (MDH). MDH activation by Act involves hydrolytic removal of the nicotinamide mononucleotide (NMN) moiety of the NAD cofactor, changing its ping-pong type of reaction mechanism into a ternary complex reaction mechanism. It requires the presence of magnesium ions and is also able to use ADP-ribose. The sequence is that of Methanol dehydrogenase activator from Bacillus methanolicus.